The following is a 600-amino-acid chain: NADH-quinone oxidoreductase subunit C/D (600 aa).

The NADH dehydrogenase I subunit C stretch occupies residues 1 to 190 (MVNNMTDLTA…SPFELTKAKQ (190 aa)). Residues 214-600 (DFMFLNLGPN…IDFVMSDVDR (387 aa)) form an NADH dehydrogenase I subunit D region.

It in the N-terminal section; belongs to the complex I 30 kDa subunit family. This sequence in the C-terminal section; belongs to the complex I 49 kDa subunit family. As to quaternary structure, NDH-1 is composed of 13 different subunits. Subunits NuoB, CD, E, F, and G constitute the peripheral sector of the complex.

Its subcellular location is the cell inner membrane. It catalyses the reaction a quinone + NADH + 5 H(+)(in) = a quinol + NAD(+) + 4 H(+)(out). In terms of biological role, NDH-1 shuttles electrons from NADH, via FMN and iron-sulfur (Fe-S) centers, to quinones in the respiratory chain. The immediate electron acceptor for the enzyme in this species is believed to be ubiquinone. Couples the redox reaction to proton translocation (for every two electrons transferred, four hydrogen ions are translocated across the cytoplasmic membrane), and thus conserves the redox energy in a proton gradient. This Escherichia coli (strain K12 / DH10B) protein is NADH-quinone oxidoreductase subunit C/D.